A 467-amino-acid chain; its full sequence is Fumarate hydratase class II (467 aa).

Residues 98–100, R126, 129–132, 139–141, and T187 each bind substrate; these read SGT, HPND, and SSN. H188 acts as the Proton donor/acceptor in catalysis. Residue S318 is part of the active site. Substrate is bound by residues S319 and 324 to 326; that span reads KVN.

This sequence belongs to the class-II fumarase/aspartase family. Fumarase subfamily. As to quaternary structure, homotetramer.

It localises to the cytoplasm. It carries out the reaction (S)-malate = fumarate + H2O. It functions in the pathway carbohydrate metabolism; tricarboxylic acid cycle; (S)-malate from fumarate: step 1/1. In terms of biological role, involved in the TCA cycle. Catalyzes the stereospecific interconversion of fumarate to L-malate. This chain is Fumarate hydratase class II, found in Salmonella typhi.